The following is a 920-amino-acid chain: MNRRDFIKSTAAAAACASAGIALPANLNAEENHGWRWDKAVCRFCGTGCGIMVATKNGKIVAVKGDPEAPVNRGLNCIKGYFNAKIMYGDDRITEPLLRVNSKGEFDKHGKFAPVSWKKAFDVMEKEFKKAYKEKGPTGIAVFGSGQYTIQEGYAAAKLVKAGFRSNNIDPNARHCMASAVVGFMQVFGIDEPSGCFDDIELTDTIVTWGANMAEMHPILWSRVNDRKLSAPEKVKVVNLSTFSSRTSSIADIEIIFRPSTDVAIWNYIAREIVYNHPEAIDTEFLKNCEFATGPVDIGYGMRNNPNHPKFSEAEKDTVSHQVSKKLSQAEGVSLAYLGLKAGDTLEMKNAKKAGKHWAISFEEFKKALAPYTLDYVAEIAKGDENESIEQFKEKLQNLANLYIEKNRKIVSFWTMGFNQHTRGTWVNEQSYMVHFLLGKQASPGNGAFSLTGQPSACGTAREVGTFCHRLPADMVVANPKHREITEKIWKLPAGTINPKNGSHFVGLMRDLEDGKVKFAWVQVNNPWHNTANANHWIKAAREMDNFIVVSDCYPGISAKVADLILPSAMIYEKWGAYGNAERRTQHWRQQVLPVGDAMSDTWQILEFAKRFKLKDVWGEQKIDDKLTLPNVLEEAKTMGYDENATLFDILFANDYYKGFKPEKIKFDNSEVNGDTRNVKGSDGEVFKGYGFFIQKALWEEYRKFGLGHGHDLADFDTYHKVRGLKWPVVDGKETSWRFNKKYDPYAKKEETSGDFAFYGNKNKKLDKGDLIGIKGEDKVDINNKAKIFFRPYMDPPEIPSEEYPFWLCTGRVLEHWHSGTMTMRVPELYRAVPEALCYMNPLDAEKLKLSQGDTIWIESRRGKVKVKIDTRGRNIPPVGLVYVPWFDENVFINKVTLDATCPLSSETDYKKCAVKIYKA.

Residues 1–29 (MNRRDFIKSTAAAAACASAGIALPANLNA) constitute a signal peptide (tat-type signal). The 4Fe-4S Mo/W bis-MGD-type domain maps to 35–91 (WRWDKAVCRFCGTGCGIMVATKNGKIVAVKGDPEAPVNRGLNCIKGYFNAKIMYGDD). The [4Fe-4S] cluster site is built by cysteine 42, cysteine 45, cysteine 49, and cysteine 77. Mo-bis(molybdopterin guanine dinucleotide)-binding positions include lysine 79, glutamine 147, asparagine 172, cysteine 176, 209 to 216 (WGANMAEM), methionine 416, glutamine 420, asparagine 526, 551 to 552 (SD), lysine 574, aspartate 601, and 810 to 819 (TGRVLEHWHS). Tryptophan 886 lines the substrate pocket. Positions 894 and 911 each coordinate Mo-bis(molybdopterin guanine dinucleotide).

Belongs to the prokaryotic molybdopterin-containing oxidoreductase family. NasA/NapA/NarB subfamily. As to quaternary structure, component of the periplasmic nitrate reductase NapAB complex composed of NapA and NapB. [4Fe-4S] cluster is required as a cofactor. It depends on Mo-bis(molybdopterin guanine dinucleotide) as a cofactor. In terms of processing, predicted to be exported by the Tat system. The position of the signal peptide cleavage has not been experimentally proven.

The protein localises to the periplasm. The catalysed reaction is 2 Fe(II)-[cytochrome] + nitrate + 2 H(+) = 2 Fe(III)-[cytochrome] + nitrite + H2O. Catalytic subunit of the periplasmic nitrate reductase complex NapAB. Receives electrons from NapB and catalyzes the reduction of nitrate to nitrite. The sequence is that of Periplasmic nitrate reductase from Campylobacter hominis (strain ATCC BAA-381 / DSM 21671 / CCUG 45161 / LMG 19568 / NCTC 13146 / CH001A).